Consider the following 487-residue polypeptide: Betaine aldehyde dehydrogenase (487 aa).

Residues S26 and D93 each coordinate K(+). 150–152 (GAW) contributes to the NAD(+) binding site. The active-site Charge relay system is K162. Residues 176–179 (KPSE) and 229–232 (SVPT) contribute to the NAD(+) site. Residue L244 participates in K(+) binding. Residue E250 is the Proton acceptor of the active site. NAD(+) is bound by residues G252, C284, and E384. Residue C284 is the Nucleophile of the active site. Residue C284 is modified to Cysteine sulfenic acid (-SOH). Residues K454 and G457 each coordinate K(+). E461 functions as the Charge relay system in the catalytic mechanism.

The protein belongs to the aldehyde dehydrogenase family. As to quaternary structure, dimer of dimers. K(+) serves as cofactor.

It catalyses the reaction betaine aldehyde + NAD(+) + H2O = glycine betaine + NADH + 2 H(+). It participates in amine and polyamine biosynthesis; betaine biosynthesis via choline pathway; betaine from betaine aldehyde: step 1/1. Functionally, involved in the biosynthesis of the osmoprotectant glycine betaine. Catalyzes the irreversible oxidation of betaine aldehyde to the corresponding acid. This chain is Betaine aldehyde dehydrogenase, found in Rhizobium johnstonii (strain DSM 114642 / LMG 32736 / 3841) (Rhizobium leguminosarum bv. viciae).